The following is a 586-amino-acid chain: Arginine--tRNA ligase (586 aa).

The 'HIGH' region signature appears at 131–141 (ANPTGPMHVGH).

The protein belongs to the class-I aminoacyl-tRNA synthetase family. As to quaternary structure, monomer.

It localises to the cytoplasm. It catalyses the reaction tRNA(Arg) + L-arginine + ATP = L-arginyl-tRNA(Arg) + AMP + diphosphate. The sequence is that of Arginine--tRNA ligase from Xanthobacter autotrophicus (strain ATCC BAA-1158 / Py2).